Here is a 347-residue protein sequence, read N- to C-terminus: D-alanine--D-alanine ligase (347 aa).

Positions 138-339 constitute an ATP-grasp domain; the sequence is KILCSHAGIP…YSQVIETILA (202 aa). 171–226 is a binding site for ATP; it reads SDRFTFPLFVKPVDAGSSFGCTFVDFFEQLPVAIEHALQHGKSAIVEPALDAPEVF. Asp-296, Glu-308, and Asn-310 together coordinate Mg(2+).

Belongs to the D-alanine--D-alanine ligase family. Requires Mg(2+) as cofactor. Mn(2+) is required as a cofactor.

The protein localises to the cytoplasm. The catalysed reaction is 2 D-alanine + ATP = D-alanyl-D-alanine + ADP + phosphate + H(+). The protein operates within cell wall biogenesis; peptidoglycan biosynthesis. In terms of biological role, cell wall formation. The polypeptide is D-alanine--D-alanine ligase (Tropheryma whipplei (strain TW08/27) (Whipple's bacillus)).